Here is a 466-residue protein sequence, read N- to C-terminus: Probable Xaa-Pro aminopeptidase pepP (466 aa).

Residues Asp-264, Asp-275, Glu-398, and Glu-438 each contribute to the Mn(2+) site.

The protein belongs to the peptidase M24B family. It depends on Mn(2+) as a cofactor.

It carries out the reaction Release of any N-terminal amino acid, including proline, that is linked to proline, even from a dipeptide or tripeptide.. Its function is as follows. Catalyzes the removal of a penultimate prolyl residue from the N-termini of peptides. In Aspergillus terreus (strain NIH 2624 / FGSC A1156), this protein is Probable Xaa-Pro aminopeptidase pepP (pepP).